The chain runs to 473 residues: ATP synthase subunit beta (473 aa).

158–165 contacts ATP; sequence GGAGVGKT.

Belongs to the ATPase alpha/beta chains family. F-type ATPases have 2 components, CF(1) - the catalytic core - and CF(0) - the membrane proton channel. CF(1) has five subunits: alpha(3), beta(3), gamma(1), delta(1), epsilon(1). CF(0) has three main subunits: a(1), b(2) and c(9-12). The alpha and beta chains form an alternating ring which encloses part of the gamma chain. CF(1) is attached to CF(0) by a central stalk formed by the gamma and epsilon chains, while a peripheral stalk is formed by the delta and b chains.

The protein localises to the cell membrane. The catalysed reaction is ATP + H2O + 4 H(+)(in) = ADP + phosphate + 5 H(+)(out). Functionally, produces ATP from ADP in the presence of a proton gradient across the membrane. The catalytic sites are hosted primarily by the beta subunits. This Geobacillus thermodenitrificans (strain NG80-2) protein is ATP synthase subunit beta.